Consider the following 746-residue polypeptide: Ribosome biogenesis protein BOP1 (746 aa).

The segment at 1–116 is disordered; that stretch reads MAGSRGAGRT…PCPRTEMASA (116 aa). The span at 43-65 shows a compositional bias: low complexity; the sequence is SHSTGSDSGVSDSEESVFSGLED. Positions 66–87 are enriched in acidic residues; the sequence is SGSDSSEDDDEGDEEGEDGALD. Positions 88 to 99 are enriched in basic and acidic residues; it reads DEGHSGIKKTTE. Thr-106 bears the Phosphothreonine mark. Residue Tyr-122 is modified to Phosphotyrosine. 2 positions are modified to phosphoserine: Ser-126 and Ser-127. The segment at 265-427 is sufficient for nucleolar localization; sequence MGWIQPRRPR…CLSVSPGGQW (163 aa). WD repeat units follow at residues 411–450, 452–492, 532–576, 577–615, 618–657, 661–700, and 716–746; these read GHSD…CVRT, PVGG…RLVA, CHGK…SPFR, RSHG…LTKK, PNCK…KPYR, HHKK…DLLQ, and TRDL…RLFT.

It belongs to the WD repeat BOP1/ERB1 family. In terms of assembly, component of the PeBoW complex, composed of BOP1, PES1 and WDR12. The complex is held together by BOP1, which interacts with PES1 via its N-terminal domain and with WDR12 via a high-affinity interaction between the seven-bladed beta-propeller domains of the 2 proteins. The NOP7 complex associates with the 66S pre-ribosome. The PeBoW complex associates with DDX27, BOP1 interacts directly with DDX27.

The protein localises to the nucleus. It is found in the nucleolus. It localises to the nucleoplasm. In terms of biological role, component of the PeBoW complex, which is required for maturation of 28S and 5.8S ribosomal RNAs and formation of the 60S ribosome. This Homo sapiens (Human) protein is Ribosome biogenesis protein BOP1.